Reading from the N-terminus, the 957-residue chain is Glycine dehydrogenase (decarboxylating) (957 aa).

Lys-708 is subject to N6-(pyridoxal phosphate)lysine.

This sequence belongs to the GcvP family. As to quaternary structure, the glycine cleavage system is composed of four proteins: P, T, L and H. The cofactor is pyridoxal 5'-phosphate.

The catalysed reaction is N(6)-[(R)-lipoyl]-L-lysyl-[glycine-cleavage complex H protein] + glycine + H(+) = N(6)-[(R)-S(8)-aminomethyldihydrolipoyl]-L-lysyl-[glycine-cleavage complex H protein] + CO2. The glycine cleavage system catalyzes the degradation of glycine. The P protein binds the alpha-amino group of glycine through its pyridoxal phosphate cofactor; CO(2) is released and the remaining methylamine moiety is then transferred to the lipoamide cofactor of the H protein. The polypeptide is Glycine dehydrogenase (decarboxylating) (Escherichia coli O7:K1 (strain IAI39 / ExPEC)).